An 836-amino-acid chain; its full sequence is Protein AKNAD1 (836 aa).

Polar residues-rich tracts occupy residues 159 to 172, 181 to 192, and 227 to 248; these read SWPKEQTPELTDQL, SNKPGSATTTEE, and SYQGQSPQKQQTEKANSGNTFK. Disordered regions lie at residues 159–248 and 303–325; these read SWPK…NTFK and LETTPESNCVEKQHQEQKGKITE. Basic and acidic residues predominate over residues 311–323; the sequence is CVEKQHQEQKGKI. Residues 372 to 484 adopt a coiled-coil conformation; it reads QKISQGKQMC…DVKEKMDESK (113 aa). Disordered regions lie at residues 510-545 and 575-596; these read SNEIPKEHPGHPSGPRGSGGSEVTGTPQGGPQEAPN and MRLSSNSGEDPNGTPRRQDCAE.

Belongs to the AKNA family.

The sequence is that of Protein AKNAD1 (AKNAD1) from Homo sapiens (Human).